Reading from the N-terminus, the 588-residue chain is Vesicular glutamate transporter 3 (588 aa).

The Cytoplasmic segment spans residues 1–76; that stretch reads MPFNAFDTFK…CSCCGIPKRY (76 aa). A helical membrane pass occupies residues 77–97; the sequence is IIAVMSGLGFCISFGIRCNLG. Residues 98-130 are Vesicular-facing; sequence VAIVEMVNNSTVYVDGKPEIQTAQFNWDPETVG. An N-linked (GlcNAc...) asparagine glycan is attached at N106. Residues 131-151 form a helical membrane-spanning segment; that stretch reads LIHGSFFWGYIVTQIPGGFIS. The Cytoplasmic segment spans residues 152-153; sequence NK. The chain crosses the membrane as a helical span at residues 154–174; it reads FAANRVFGAAIFLTSTLNMFI. Residues 175–182 are Vesicular-facing; that stretch reads PSAARVHY. The helical transmembrane segment at 183–203 threads the bilayer; sequence GCVMCVRILQGLVEGVTYPAC. At 204-221 the chain is on the cytoplasmic side; it reads HGMWSKWAPPLERSRLAT. A helical transmembrane segment spans residues 222 to 242; it reads TSFCGSYAGAVVAMPLAGVLV. The Vesicular portion of the chain corresponds to 243 to 249; that stretch reads QYIGWAS. Residues 250 to 270 traverse the membrane as a helical segment; the sequence is VFYIYGMFGIIWYMFWLLQAY. At 271 to 314 the chain is on the cytoplasmic side; sequence ECPAVHPTISNEERTYIETSIGEGANLASLSKFNTPWRRFFTSL. A helical transmembrane segment spans residues 315-335; the sequence is PVYAIIVANFCRSWTFYLLLI. Residues 336–353 lie on the Vesicular side of the membrane; the sequence is SQPAYFEEVFGFAISKVG. The helical transmembrane segment at 354 to 374 threads the bilayer; the sequence is LLSAVPHMVMTIVVPIGGQLA. The Cytoplasmic portion of the chain corresponds to 375-390; sequence DYLRSRKILTTTAVRK. The chain crosses the membrane as a helical span at residues 391-411; that stretch reads IMNCGGFGMEATLLLVVGFSH. Residues 412–413 lie on the Vesicular side of the membrane; sequence TK. A helical transmembrane segment spans residues 414-434; that stretch reads GVAISFLVLAVGFSGFAISGF. Over 435–447 the chain is Cytoplasmic; the sequence is NVNHLDIAPRYAS. Residues 448-468 form a helical membrane-spanning segment; it reads ILMGISNGVGTLSGMVCPLIV. The Vesicular segment spans residues 469-481; it reads GAMTKHKTREEWQ. Residues 482–502 traverse the membrane as a helical segment; sequence NVFLIAALVHYSGVIFYGVFA. The Cytoplasmic portion of the chain corresponds to 503 to 585; sequence SGEKQDWADP…LSYQNEEDFS (83 aa). Residues 539–588 form a disordered region; the sequence is FVSPRKKMSYGATTQNCEVQKTDRRQQRESAFEGEEPLSYQNEEDFSETS. The segment covering 558 to 569 has biased composition (basic and acidic residues); the sequence is QKTDRRQQRESA. A compositionally biased stretch (acidic residues) spans 570–588; it reads FEGEEPLSYQNEEDFSETS.

It belongs to the major facilitator superfamily. Sodium/anion cotransporter family. VGLUT subfamily. In terms of tissue distribution, expressed in brain, kidney and liver. Expressed within the amygdala, brainstem, cerberal cortex, dorsal root ganglia, dorsal spinal cord, hippocampus, hypothalamus, retina, striatum and ventral spinal cord. Expressed within neurons of the caudate-putamen, olfactory tubercle, nucleus accumbens, hippocampus, interpeduncular nucleus and dorsal and medial raphe nuclei. Expressed in inner hair cells of the ear. Expressed at synaptic terminals within the lateral superior olive (LSO), a nucleus of the mammalian sound localization system, and in the medial nucleus of the trapezoid body (MNTB), which provides inhibitory input to the LSO.

It is found in the cytoplasmic vesicle. It localises to the secretory vesicle. The protein localises to the synaptic vesicle membrane. Its subcellular location is the cell membrane. The protein resides in the synapse. It is found in the synaptosome. It carries out the reaction L-glutamate(out) = L-glutamate(in). The enzyme catalyses chloride(in) = chloride(out). The catalysed reaction is 3 Na(+)(out) + phosphate(out) = 3 Na(+)(in) + phosphate(in). The L-glutamate uniporter activity exhibits a biphasic dependence on chloride concentration. Chloride channel activity is allosterically activated by lumenal H(+) and Cl(-) leading to synaptic vesicles acidification. The glutamate transport activity is allosterically activated by lumenal H(+) and Cl(-), preventing non-vesicular L-glutamate release. Its function is as follows. Multifunctional transporter that transports L-glutamate as well as multiple ions such as chloride, sodium and phosphate. At the synaptic vesicle membrane, mainly functions as an uniporter that mediates the uptake of L-glutamate into synaptic vesicles at presynaptic nerve terminals of excitatory neural cells. The L-glutamate uniporter activity is electrogenic and is driven by the proton electrochemical gradient, mainly by the electrical gradient established by the vacuolar H(+)-ATPase across the synaptic vesicle membrane. In addition, functions as a chloride channel that allows a chloride permeation through the synaptic vesicle membrane that affects the proton electrochemical gradient and promotes synaptic vesicles acidification. At the plasma membrane, following exocytosis, functions as a symporter of Na(+) and phosphate from the extracellular space to the cytoplasm allowing synaptic phosphate homeostasis regulation. The symporter activity is electrogenic. Moreover, operates synergistically with SLC18A3/VACHT under a constant H(+) gradient, thereby allowing striatal vesicular acetylcholine uptake. This is Vesicular glutamate transporter 3 from Rattus norvegicus (Rat).